The following is a 73-amino-acid chain: Small ribosomal subunit protein bS18 (73 aa).

This sequence belongs to the bacterial ribosomal protein bS18 family. As to quaternary structure, part of the 30S ribosomal subunit. Forms a tight heterodimer with protein bS6.

Its function is as follows. Binds as a heterodimer with protein bS6 to the central domain of the 16S rRNA, where it helps stabilize the platform of the 30S subunit. This chain is Small ribosomal subunit protein bS18, found in Prochlorococcus marinus (strain SARG / CCMP1375 / SS120).